A 190-amino-acid chain; its full sequence is Lysozyme g (190 aa).

Basic and acidic residues predominate over residues 1–10 (MPYGKIEDIK). Residues 1-31 (MPYGKIEDIKTSGASDVTAAQDGLKEGGWKS) are disordered. Catalysis depends on residues Glu-71 and Asp-84.

It belongs to the glycosyl hydrolase 23 family.

The enzyme catalyses Hydrolysis of (1-&gt;4)-beta-linkages between N-acetylmuramic acid and N-acetyl-D-glucosamine residues in a peptidoglycan and between N-acetyl-D-glucosamine residues in chitodextrins.. The sequence is that of Lysozyme g from Takifugu rubripes (Japanese pufferfish).